A 255-amino-acid chain; its full sequence is 3-deoxy-manno-octulosonate cytidylyltransferase (255 aa).

It belongs to the KdsB family.

The protein resides in the cytoplasm. The enzyme catalyses 3-deoxy-alpha-D-manno-oct-2-ulosonate + CTP = CMP-3-deoxy-beta-D-manno-octulosonate + diphosphate. Its pathway is nucleotide-sugar biosynthesis; CMP-3-deoxy-D-manno-octulosonate biosynthesis; CMP-3-deoxy-D-manno-octulosonate from 3-deoxy-D-manno-octulosonate and CTP: step 1/1. It participates in bacterial outer membrane biogenesis; lipopolysaccharide biosynthesis. Functionally, activates KDO (a required 8-carbon sugar) for incorporation into bacterial lipopolysaccharide in Gram-negative bacteria. In Polaromonas sp. (strain JS666 / ATCC BAA-500), this protein is 3-deoxy-manno-octulosonate cytidylyltransferase.